An 87-amino-acid chain; its full sequence is DNA-directed RNA polymerase subunit omega (87 aa).

It belongs to the RNA polymerase subunit omega family. As to quaternary structure, the RNAP catalytic core consists of 2 alpha, 1 beta, 1 beta' and 1 omega subunit. When a sigma factor is associated with the core the holoenzyme is formed, which can initiate transcription.

The catalysed reaction is RNA(n) + a ribonucleoside 5'-triphosphate = RNA(n+1) + diphosphate. In terms of biological role, promotes RNA polymerase assembly. Latches the N- and C-terminal regions of the beta' subunit thereby facilitating its interaction with the beta and alpha subunits. This is DNA-directed RNA polymerase subunit omega from Pseudomonas fluorescens (strain SBW25).